Consider the following 401-residue polypeptide: Beta-ketoadipyl-CoA thiolase (401 aa).

The active-site Acyl-thioester intermediate is the cysteine 91. Residues histidine 357 and cysteine 387 each act as proton acceptor in the active site.

It belongs to the thiolase-like superfamily. Thiolase family.

It catalyses the reaction succinyl-CoA + acetyl-CoA = 3-oxoadipyl-CoA + CoA. It participates in aromatic compound metabolism; beta-ketoadipate pathway; acetyl-CoA and succinyl-CoA from 3-oxoadipate: step 2/2. In terms of biological role, catalyzes thiolytic cleavage of beta-ketoadipyl-CoA to succinyl-CoA and acetyl-CoA. This chain is Beta-ketoadipyl-CoA thiolase (pcaF), found in Pseudomonas aeruginosa (strain ATCC 15692 / DSM 22644 / CIP 104116 / JCM 14847 / LMG 12228 / 1C / PRS 101 / PAO1).